We begin with the raw amino-acid sequence, 1244 residues long: MAVAVAAAGVLMGSEPGPAEELAKLEYLSLVSKVCTELDNHLGINDKDLAEFVISLAEKNTTFDTFKASLVKNGAEFTDSLISNLLRLIQTMRPPAKPSTSKDPVVKPKTEKEKLRELFPVLCQPDNPSARTMLDEEDVKVAVDVLKELEALMPSAAGQEKQRDPEHRDRTKKKKRSRSRDRDRDRDRDRDRDRDRDRDRDKDRERDRDRERDRERDRERDHKRRHRSRSRSHSRTRERTKGKSRYRSRSRSQSPFKDRKDREKYGERNLDRWRDKHVDRPPPEEPAIGDIYNGKVTSIMQFGCFVQLEGLRKRWEGLVHISELRREGRVANVADVVSKGQRVKVKVLSFTGTKTSLSMKDVDQETGEDLNPNRRRNLVGETNEETSMRNPDRPTHLSLVSAPEVEDDSLERKRLTRISDPEKWEIKQMIAANVLSKEEFPDFDEETGILPKVDDEEDEDLEIELVEEEPPFLRGHTKQSMDMSPIKIVKNPDGSLSQAAMMQSALAKERRELKQAQREAEMDSIPMGLNKHWVDPLPDAEGRQIAANMRGIGMMPNDIPEWKKHAFGGNKASYGKKTQMSILEQRESLPIYKLKEQLVQAVHDNQILIVIGETGSGKTTQITQYLAEAGYTSRGKIGCTQPRRVAAMSVAKRVSEEFGCCLGQEVGYTIRFEDCTSPETVIKYMTDGMLLRECLIDPDLTQYAIIMLDEAHERTIHTDVLFGLLKKTVQKRQDMKLIVTSATLDAVKFSQYFYEAPIFTIPGRTYPVEILYTKEPETDYLDASLITVMQIHLTEPPGDILVFLTGQEEIDTACEILYERMKSLGPDVPELIILPVYSALPSEMQTRIFDPAPPGSRKVVIATNIAETSLTIDGIYYVVDPGFVKQKVYNSKTGIDQLVVTPISQAQAKQRAGRAGRTGPGKCYRLYTERAYRDEMLTTNVPEIQRTNLASTVLSLKAMGINDLLSFDFMDAPPMETLITAMEQLYTLGALDDEGLLTRLGRRMAEFPLEPMLCKMLIMSVHLGCSEEMLTIVSMLSVQNVFYRPKDKQALADQKKAKFHQTEGDHLTLLAVYNSWKNNKFSNPWCYENFIQARSLRRAQDIRKQMLGIMDRHKLDVVSCGKSTVRVQKAICSGFFRNAAKKDPQEGYRTLIDQQVVYIHPSSALFNRQPEWVVYHELVLTTKEYMREVTTIDPRWLVEFAPAFFKVSDPTKLSKQKKQQRLEPLYNRYEEPNAWRISRAFRRR.

K140 is covalently cross-linked (Glycyl lysine isopeptide (Lys-Gly) (interchain with G-Cter in SUMO2)). 2 disordered regions span residues 152-289 (LMPS…PAIG) and 361-396 (DVDQETGEDLNPNRRRNLVGETNEETSMRNPDRPTH). The span at 160-169 (EKQRDPEHRD) shows a compositional bias: basic and acidic residues. Basic residues predominate over residues 170–179 (RTKKKKRSRS). Residues 180 to 220 (RDRDRDRDRDRDRDRDRDRDRDKDRERDRDRERDRERDRER) show a composition bias toward basic and acidic residues. The segment covering 221–234 (DHKRRHRSRSRSHS) has biased composition (basic residues). Residues 256–283 (FKDRKDREKYGERNLDRWRDKHVDRPPP) are compositionally biased toward basic and acidic residues. In terms of domain architecture, S1 motif spans 289–360 (GDIYNGKVTS…TGTKTSLSMK (72 aa)). Residues 386–395 (TSMRNPDRPT) are compositionally biased toward basic and acidic residues. S419 bears the Phosphoserine mark. K423 participates in a covalent cross-link: Glycyl lysine isopeptide (Lys-Gly) (interchain with G-Cter in SUMO2). S484 is subject to Phosphoserine. The 164-residue stretch at 599–762 (VQAVHDNQIL…FYEAPIFTIP (164 aa)) folds into the Helicase ATP-binding domain. 612–619 (GETGSGKT) serves as a coordination point for ATP. A DEAH box motif is present at residues 709 to 712 (DEAH). The Helicase C-terminal domain maps to 780-960 (YLDASLITVM…STVLSLKAMG (181 aa)).

The protein belongs to the DEAD box helicase family. DEAH subfamily. DDX8/PRP22 sub-subfamily. In terms of assembly, identified in the spliceosome C complex. Interacts with ARRB2; the interaction is detected in the nucleus upon OR1D2 stimulation. Interacts with SRRM2. Interacts with CACTIN.

It localises to the nucleus. The enzyme catalyses ATP + H2O = ADP + phosphate + H(+). Functionally, involved in pre-mRNA splicing as component of the spliceosome. Facilitates nuclear export of spliced mRNA by releasing the RNA from the spliceosome. The protein is ATP-dependent RNA helicase DHX8 (Dhx8) of Mus musculus (Mouse).